Consider the following 100-residue polypeptide: Small ribosomal subunit protein uS14c (100 aa).

The protein belongs to the universal ribosomal protein uS14 family. As to quaternary structure, part of the 30S ribosomal subunit.

It localises to the plastid. Its subcellular location is the chloroplast. In terms of biological role, binds 16S rRNA, required for the assembly of 30S particles. This chain is Small ribosomal subunit protein uS14c, found in Gracilaria tenuistipitata var. liui (Red alga).